Reading from the N-terminus, the 365-residue chain is Cytochrome P450 71A3 (365 aa).

The protein belongs to the cytochrome P450 family. The cofactor is heme.

Functionally, may have a role in maturation, such as during flavor formation or other metabolite production specific to aging tissues. The polypeptide is Cytochrome P450 71A3 (CYP71A3) (Solanum melongena (Eggplant)).